Reading from the N-terminus, the 193-residue chain is uncharacterized protein (193 aa).

Residues 1-26 form the signal peptide; the sequence is MRNVFVGALCMCGMSFVFSDSVRSAA.

This is an uncharacterized protein from Treponema pallidum (strain Nichols).